The sequence spans 96 residues: Co-chaperonin GroES (96 aa).

The protein belongs to the GroES chaperonin family. Heptamer of 7 subunits arranged in a ring. Interacts with the chaperonin GroEL.

It localises to the cytoplasm. Together with the chaperonin GroEL, plays an essential role in assisting protein folding. The GroEL-GroES system forms a nano-cage that allows encapsulation of the non-native substrate proteins and provides a physical environment optimized to promote and accelerate protein folding. GroES binds to the apical surface of the GroEL ring, thereby capping the opening of the GroEL channel. The polypeptide is Co-chaperonin GroES (Actinobacillus pleuropneumoniae serotype 5b (strain L20)).